We begin with the raw amino-acid sequence, 326 residues long: Transmembrane protein PVRIG (326 aa).

3 helical membrane passes run Leu26–Val46, Cys62–Gly78, and Leu172–Leu192. At Tyr233 the chain carries Phosphotyrosine. Residues Ala296–Arg326 form a disordered region.

As to quaternary structure, interacts with NECTIN2, hence competing with CD226. Expressed in some types of immune cells. Expressed at low levels on the surface of freshly isolated T-cells and natural killer (NK) cells, predominantly on CD8+ T-cells (mainly memory/effector, but not naive cells) and on both CD16+ and CD16- NK cells. T-cell expression levels are variable among individuals. Not detected in B-cells, naive or helper T-cells, monocytes, nor neutrophils (at protein level). Not detected in dendritic cells.

The protein resides in the cell membrane. Cell surface receptor for NECTIN2. May act as a coinhibitory receptor that suppresses T-cell receptor-mediated signals. Following interaction with NECTIN2, inhibits T-cell proliferation. Competes with CD226 for NECTIN2-binding. The chain is Transmembrane protein PVRIG (PVRIG) from Homo sapiens (Human).